A 678-amino-acid chain; its full sequence is DNA ligase (678 aa).

Residues 36 to 40 (DVVYD), 85 to 86 (SL), and Glu117 each bind NAD(+). The active-site N6-AMP-lysine intermediate is the Lys119. Residues Arg140, Glu177, Lys294, and Lys318 each coordinate NAD(+). Residues Cys412, Cys415, Cys430, and Cys435 each coordinate Zn(2+). The 81-residue stretch at 598–678 (ISSTPLAGKT…QLLKMINPQE (81 aa)) folds into the BRCT domain.

The protein belongs to the NAD-dependent DNA ligase family. LigA subfamily. It depends on Mg(2+) as a cofactor. The cofactor is Mn(2+).

The catalysed reaction is NAD(+) + (deoxyribonucleotide)n-3'-hydroxyl + 5'-phospho-(deoxyribonucleotide)m = (deoxyribonucleotide)n+m + AMP + beta-nicotinamide D-nucleotide.. In terms of biological role, DNA ligase that catalyzes the formation of phosphodiester linkages between 5'-phosphoryl and 3'-hydroxyl groups in double-stranded DNA using NAD as a coenzyme and as the energy source for the reaction. It is essential for DNA replication and repair of damaged DNA. This Gloeothece citriformis (strain PCC 7424) (Cyanothece sp. (strain PCC 7424)) protein is DNA ligase.